Here is a 180-residue protein sequence, read N- to C-terminus: Large ribosomal subunit protein uL22 (180 aa).

The disordered stretch occupies residues 111-180 (VVVESRPAKD…ETSDAKGGSD (70 aa)). Residues 142–166 (PAKKAPAKKAPAKKAPAKTAAKKTP) are compositionally biased toward basic residues. The span at 171–180 (ETSDAKGGSD) shows a compositional bias: basic and acidic residues.

Belongs to the universal ribosomal protein uL22 family. As to quaternary structure, part of the 50S ribosomal subunit.

This protein binds specifically to 23S rRNA; its binding is stimulated by other ribosomal proteins, e.g. L4, L17, and L20. It is important during the early stages of 50S assembly. It makes multiple contacts with different domains of the 23S rRNA in the assembled 50S subunit and ribosome. In terms of biological role, the globular domain of the protein is located near the polypeptide exit tunnel on the outside of the subunit, while an extended beta-hairpin is found that lines the wall of the exit tunnel in the center of the 70S ribosome. This is Large ribosomal subunit protein uL22 from Mycobacterium avium (strain 104).